A 226-amino-acid polypeptide reads, in one-letter code: Protein pdh1 (226 aa).

Residues 1–26 (MNHFSKFSVTKRLLILEVLFSAISFG) form the signal peptide. At 27 to 41 (ISIYIKVFGRSSIVT) the chain is on the extracellular side. A helical membrane pass occupies residues 42–62 (FFLLCFHLVPNALFLFPWTII). The Cytoplasmic segment spans residues 63–65 (TTS). Residues 66–86 (FVDANVFTLLSSILILSVYGV) traverse the membrane as a helical segment. At 87 to 97 (EIERSWGHKEY) the chain is on the extracellular side. A helical membrane pass occupies residues 98–118 (LLFCQFLTVIPNIAVLIPCFI). The Cytoplasmic portion of the chain corresponds to 119–191 (AYKITDSHYL…VFQSFPWTYF (73 aa)). The helical transmembrane segment at 192-212 (CLAVSGTCISELYVLFVHPVV) threads the bilayer. Over 213-226 (QELFHLESHTQLPI) the chain is Extracellular.

The protein resides in the membrane. This chain is Protein pdh1 (pdh1), found in Schizosaccharomyces pombe (strain 972 / ATCC 24843) (Fission yeast).